The following is a 341-amino-acid chain: Casein kinase I isoform alpha (341 aa).

One can recognise a Protein kinase domain in the interval 16–284 (YKLIRKIGSG…YLRQLFRILF (269 aa)). ATP-binding positions include 22–30 (IGSGSFGDI) and K45. The active-site Proton acceptor is the D135. A compositionally biased stretch (polar residues) spans 306–320 (QSQSSGVPGTNTTTQ). The interval 306-341 (QSQSSGVPGTNTTTQGATVPSAGVPAGVAPGGTTPQ) is disordered. A compositionally biased stretch (low complexity) spans 321-341 (GATVPSAGVPAGVAPGGTTPQ).

The protein belongs to the protein kinase superfamily. CK1 Ser/Thr protein kinase family. Casein kinase I subfamily.

It carries out the reaction L-seryl-[protein] + ATP = O-phospho-L-seryl-[protein] + ADP + H(+). The catalysed reaction is L-threonyl-[protein] + ATP = O-phospho-L-threonyl-[protein] + ADP + H(+). The polypeptide is Casein kinase I isoform alpha (kin-19) (Caenorhabditis elegans).